The primary structure comprises 85 residues: uncharacterized protein (85 aa).

Positions Met-1 to Arg-85 are disordered. Basic and acidic residues predominate over residues Ala-47 to Gly-61.

This is an uncharacterized protein from Streptomyces lividans.